Here is a 741-residue protein sequence, read N- to C-terminus: Phosphoribosylformylglycinamidine synthase subunit PurL (741 aa).

Residue His-53 is part of the active site. Positions 56 and 95 each coordinate ATP. Residue Glu-97 participates in Mg(2+) binding. Substrate is bound by residues 98-101 (SHNH) and Arg-120. The active-site Proton acceptor is the His-99. Asp-121 is a binding site for Mg(2+). Gln-244 provides a ligand contact to substrate. Position 274 (Asp-274) interacts with Mg(2+). 318–320 (ESQ) contacts substrate. 2 residues coordinate ATP: Asp-501 and Gly-538. Asn-539 is a binding site for Mg(2+). Ser-541 serves as a coordination point for substrate.

This sequence belongs to the FGAMS family. Monomer. Part of the FGAM synthase complex composed of 1 PurL, 1 PurQ and 2 PurS subunits.

The protein resides in the cytoplasm. The catalysed reaction is N(2)-formyl-N(1)-(5-phospho-beta-D-ribosyl)glycinamide + L-glutamine + ATP + H2O = 2-formamido-N(1)-(5-O-phospho-beta-D-ribosyl)acetamidine + L-glutamate + ADP + phosphate + H(+). It participates in purine metabolism; IMP biosynthesis via de novo pathway; 5-amino-1-(5-phospho-D-ribosyl)imidazole from N(2)-formyl-N(1)-(5-phospho-D-ribosyl)glycinamide: step 1/2. Functionally, part of the phosphoribosylformylglycinamidine synthase complex involved in the purines biosynthetic pathway. Catalyzes the ATP-dependent conversion of formylglycinamide ribonucleotide (FGAR) and glutamine to yield formylglycinamidine ribonucleotide (FGAM) and glutamate. The FGAM synthase complex is composed of three subunits. PurQ produces an ammonia molecule by converting glutamine to glutamate. PurL transfers the ammonia molecule to FGAR to form FGAM in an ATP-dependent manner. PurS interacts with PurQ and PurL and is thought to assist in the transfer of the ammonia molecule from PurQ to PurL. The chain is Phosphoribosylformylglycinamidine synthase subunit PurL from Ligilactobacillus salivarius (strain UCC118) (Lactobacillus salivarius).